A 1407-amino-acid chain; its full sequence is DNA-directed RNA polymerase subunit beta' (1407 aa).

Residues cysteine 70, cysteine 72, cysteine 85, and cysteine 88 each contribute to the Zn(2+) site. Aspartate 460, aspartate 462, and aspartate 464 together coordinate Mg(2+). Residues cysteine 814, cysteine 888, cysteine 895, and cysteine 898 each contribute to the Zn(2+) site.

The protein belongs to the RNA polymerase beta' chain family. As to quaternary structure, the RNAP catalytic core consists of 2 alpha, 1 beta, 1 beta' and 1 omega subunit. When a sigma factor is associated with the core the holoenzyme is formed, which can initiate transcription. Mg(2+) serves as cofactor. Zn(2+) is required as a cofactor.

It catalyses the reaction RNA(n) + a ribonucleoside 5'-triphosphate = RNA(n+1) + diphosphate. DNA-dependent RNA polymerase catalyzes the transcription of DNA into RNA using the four ribonucleoside triphosphates as substrates. The chain is DNA-directed RNA polymerase subunit beta' from Pectobacterium atrosepticum (strain SCRI 1043 / ATCC BAA-672) (Erwinia carotovora subsp. atroseptica).